Consider the following 462-residue polypeptide: MERIRPYRKTFLADLETPVTAYLKLAEKAPVSFLLESVERGRQSRFSIVGVGARRTFRLKDGVFTVNGERVETRDPLRALYERVYAPLERHPDLPPFFGGVVGYAAYDLVRYYERLPSLKPDDLGLPDLLFVEPEVVAVFDHLKNLLHLVAPGRDPEEAEARLFWAERRLKGPLPGVPGERAGGRARFQADFSREAYLEAVRRALDYIRAGDIFQVVLSLRLSSPLTVHPFALYRALRSVNPSPYMGYLDLGEVVLVSASPESLLRSDGRRVVTRPIAGTRPRGKDEEEDKRLAEELLRDEKEVAEHVMLLDLSRNDIGRVAAFGTVRVLEPLHVEHYSHVMHLVSTVEGILAEGKTPLDALASVLPMGTVSGAPKIRAMEIIEELEPHRRGPYGGSFGYLAYDGAMDMALTLRTFVVAKGWMHVQAGAGIVADSVPEREYEECWNKARALLKAVEMAEAGL.

Residues S37 and P244–M246 each bind L-tryptophan. Residue G279–T280 participates in chorismate binding. Mg(2+) is bound at residue E306. Chorismate contacts are provided by residues Y394, R414, G428–G430, and G430. Residue E443 coordinates Mg(2+).

Belongs to the anthranilate synthase component I family. As to quaternary structure, heterotetramer consisting of two non-identical subunits: a beta subunit (TrpG) and a large alpha subunit (TrpE). Requires Mg(2+) as cofactor.

It carries out the reaction chorismate + L-glutamine = anthranilate + pyruvate + L-glutamate + H(+). It functions in the pathway amino-acid biosynthesis; L-tryptophan biosynthesis; L-tryptophan from chorismate: step 1/5. With respect to regulation, feedback inhibited by tryptophan. Functionally, part of a heterotetrameric complex that catalyzes the two-step biosynthesis of anthranilate, an intermediate in the biosynthesis of L-tryptophan. In the first step, the glutamine-binding beta subunit (TrpG) of anthranilate synthase (AS) provides the glutamine amidotransferase activity which generates ammonia as a substrate that, along with chorismate, is used in the second step, catalyzed by the large alpha subunit of AS (TrpE) to produce anthranilate. In the absence of TrpG, TrpE can synthesize anthranilate directly from chorismate and high concentrations of ammonia. This Thermus thermophilus (strain ATCC 27634 / DSM 579 / HB8) protein is Anthranilate synthase component 1 (trpE).